Consider the following 46-residue polypeptide: Protein PsbN (46 aa).

A helical membrane pass occupies residues 10-30 (IAITILIVLLGLTAFGVYTAF).

Belongs to the PsbN family.

The protein localises to the cellular thylakoid membrane. May play a role in photosystem I and II biogenesis. This chain is Protein PsbN, found in Prochlorococcus marinus (strain SARG / CCMP1375 / SS120).